The sequence spans 317 residues: Ribosomal protein L11 methyltransferase (317 aa).

S-adenosyl-L-methionine-binding residues include threonine 158, glycine 179, aspartate 201, and asparagine 244.

It belongs to the methyltransferase superfamily. PrmA family.

The protein resides in the cytoplasm. The catalysed reaction is L-lysyl-[protein] + 3 S-adenosyl-L-methionine = N(6),N(6),N(6)-trimethyl-L-lysyl-[protein] + 3 S-adenosyl-L-homocysteine + 3 H(+). Its function is as follows. Methylates ribosomal protein L11. The sequence is that of Ribosomal protein L11 methyltransferase from Streptococcus agalactiae serotype Ia (strain ATCC 27591 / A909 / CDC SS700).